Here is a 729-residue protein sequence, read N- to C-terminus: Cytoplasmic polyadenylation element-binding protein 4 (729 aa).

Disordered regions lie at residues 20–50 (FPVRFHPHLQPPHHHQNATPNPAAFINNNTA) and 78–133 (EKAK…KEKL). A compositionally biased stretch (basic residues) spans 24–35 (FHPHLQPPHHHQ). Residues 83–96 (QQQEQQDPLEKQQL) show a composition bias toward low complexity. Residues serine 97, serine 99, and serine 137 each carry the phosphoserine modification. Residues 218 to 324 (FGGSFSPQIG…RDHRRGLNGG (107 aa)) are disordered. Residues 232–249 (HHPHHPHFQHHHSQHQQQ) are compositionally biased toward basic residues. Serine 252 and serine 255 each carry phosphoserine. Residues 285-300 (WSSYQSPSPTPSSSWS) are compositionally biased toward low complexity. Residues 301–311 (PGGGGYGGWGA) show a composition bias toward gly residues. The residue at position 326 (threonine 326) is a Phosphothreonine. Residues serine 330 and serine 332 each carry the phosphoserine modification. 2 RRM domains span residues 472–563 (RKVF…PWNL) and 580–662 (KTIF…PYVL). The tract at residues 541–543 (KLY) is RNA-binding. The Zn(2+) site is built by cysteine 667, cysteine 675, cysteine 684, cysteine 689, cysteine 694, cysteine 697, histidine 702, and histidine 710.

Belongs to the RRM CPEB family. As to quaternary structure, interacts with TOB1. In terms of tissue distribution, highly expressed in brain, including hippocampus, amygdala, granule and Purkinje cells of the cerebellum (at protein level). Expressed in spinal cord (at protein level). Expressed in kidney, lung and heart (at protein level). Expressed in liver (at protein level). Expressed in spleen and testis (at protein level). Weakly expressed in ovary and in granular cells of dentate gyrus and the pyramidal cells of CA3 and CA1 of the hippocampus.

It is found in the cytoplasm. It localises to the cell projection. Its subcellular location is the dendrite. The protein localises to the dendritic spine. The protein resides in the postsynaptic density. It is found in the axon. It localises to the growth cone. Its subcellular location is the endoplasmic reticulum. The protein localises to the perinuclear region. Sequence-specific RNA-binding protein that binds to the cytoplasmic polyadenylation element (CPE), an uridine-rich sequence element (consensus sequence 5'-UUUUUAU-3') within the mRNA 3'-UTR. RNA binding results in a clear conformational change analogous to the Venus fly trap mechanism. Regulates activation of unfolded protein response (UPR) in the process of adaptation to ER stress in liver, by maintaining translation of CPE-regulated mRNAs in conditions in which global protein synthesis is inhibited. Required for cell cycle progression, specifically for cytokinesis and chromosomal segregation. Plays a role as an oncogene promoting tumor growth and progression by positively regulating translation of t-plasminogen activator/PLAT. Stimulates proliferation of melanocytes. In contrast to CPEB1 and CPEB3, does not play role in synaptic plasticity, learning and memory. In Mus musculus (Mouse), this protein is Cytoplasmic polyadenylation element-binding protein 4 (Cpeb4).